Here is a 388-residue protein sequence, read N- to C-terminus: Dual-specificity RNA methyltransferase RlmN (388 aa).

The Proton acceptor role is filled by E109. Positions 115 to 354 constitute a Radical SAM core domain; that stretch reads EDDRATLCVS…TIVRKTRGDD (240 aa). C122 and C359 form a disulfide bridge. Positions 129, 133, and 136 each coordinate [4Fe-4S] cluster. S-adenosyl-L-methionine is bound by residues 183–184, S215, 237–239, and N316; these read GE and SLH. C359 (S-methylcysteine intermediate) is an active-site residue.

It belongs to the radical SAM superfamily. RlmN family. It depends on [4Fe-4S] cluster as a cofactor.

It localises to the cytoplasm. The enzyme catalyses adenosine(2503) in 23S rRNA + 2 reduced [2Fe-2S]-[ferredoxin] + 2 S-adenosyl-L-methionine = 2-methyladenosine(2503) in 23S rRNA + 5'-deoxyadenosine + L-methionine + 2 oxidized [2Fe-2S]-[ferredoxin] + S-adenosyl-L-homocysteine. The catalysed reaction is adenosine(37) in tRNA + 2 reduced [2Fe-2S]-[ferredoxin] + 2 S-adenosyl-L-methionine = 2-methyladenosine(37) in tRNA + 5'-deoxyadenosine + L-methionine + 2 oxidized [2Fe-2S]-[ferredoxin] + S-adenosyl-L-homocysteine. Functionally, specifically methylates position 2 of adenine 2503 in 23S rRNA and position 2 of adenine 37 in tRNAs. m2A2503 modification seems to play a crucial role in the proofreading step occurring at the peptidyl transferase center and thus would serve to optimize ribosomal fidelity. This Salmonella typhimurium (strain LT2 / SGSC1412 / ATCC 700720) protein is Dual-specificity RNA methyltransferase RlmN.